Here is a 183-residue protein sequence, read N- to C-terminus: Archaemetzincin (183 aa).

His131 provides a ligand contact to Zn(2+). Glu132 (proton acceptor) is an active-site residue. Residues His135, His141, Cys142, Cys147, and Cys166 each contribute to the Zn(2+) site.

This sequence belongs to the peptidase M54 family. In terms of assembly, monomer. Zn(2+) is required as a cofactor.

Probable zinc metalloprotease whose natural substrate is unknown. The chain is Archaemetzincin from Saccharolobus solfataricus (strain ATCC 35092 / DSM 1617 / JCM 11322 / P2) (Sulfolobus solfataricus).